Consider the following 224-residue polypeptide: UPF0758 protein VS_0182 (224 aa).

The interval 1 to 21 (MPISKMPVESMPREKLLSRGP) is disordered. Residues 102–224 (ALTSPSHTKL…VISFAERGWI (123 aa)) form the MPN domain. Residues His-173, His-175, and Asp-186 each contribute to the Zn(2+) site. The JAMM motif signature appears at 173–186 (HNHPSGVAEPSQAD).

Belongs to the UPF0758 family.

This Vibrio atlanticus (strain LGP32) (Vibrio splendidus (strain Mel32)) protein is UPF0758 protein VS_0182.